A 372-amino-acid chain; its full sequence is 12-oxophytodienoate reductase 1 (372 aa).

M1 bears the N-acetylmethionine mark. Residues 31–33 (PLT), A64, and Q106 contribute to the FMN site. H183 contributes to the substrate binding site. Y188 serves as the catalytic Proton donor. R235 is a binding site for FMN. R275 lines the substrate pocket. FMN is bound by residues 303 to 305 (AGG) and 326 to 327 (GR).

It belongs to the NADH:flavin oxidoreductase/NADH oxidase family. The cofactor is FMN. In terms of tissue distribution, mostly expressed in roots, also present in leaves, shoots and flowers. More abundant in cotyledons. In more details, expressed in peduncles, sepals, petals, around the abscission zone of siliques, maturing siliques and developing seeds.

Its subcellular location is the cytoplasm. The enzyme catalyses (1S,2S)-OPC-8 + NADP(+) = (9S,13S,15Z)-12-oxophyto-10,15-dienoate + NADPH + H(+). It functions in the pathway lipid metabolism; oxylipin biosynthesis. Specifically cleaves olefinic bonds in alpha,beta-unsaturated carbonyls and may be involved in detoxification or modification of these reactive compounds. May be involved in the biosynthesis or metabolism of oxylipin signaling molecules. In vitro, reduces 9R,13R-12-oxophytodienoic acid (9R,13R-OPDA) to 9R,13R-OPC-8:0, but only poorly 9S,13S-OPDA, the natural precursor of jasmonic acid. Can detoxify the explosive 2,4,6-trinitrotoluene (TNT) in vitro and in vivo by catalyzing its nitroreduction to form hydroxylamino-dinitrotoluene (HADNT). The polypeptide is 12-oxophytodienoate reductase 1 (Arabidopsis thaliana (Mouse-ear cress)).